The primary structure comprises 198 residues: Recombination protein RecR (198 aa).

A C4-type zinc finger spans residues 57–72; sequence CQRCNTFSEAELCAIC. The Toprim domain maps to 80-175; it reads DQLCIVEMPA…TVTRIARGMP (96 aa).

It belongs to the RecR family.

Its function is as follows. May play a role in DNA repair. It seems to be involved in an RecBC-independent recombinational process of DNA repair. It may act with RecF and RecO. In Chromobacterium violaceum (strain ATCC 12472 / DSM 30191 / JCM 1249 / CCUG 213 / NBRC 12614 / NCIMB 9131 / NCTC 9757 / MK), this protein is Recombination protein RecR.